The following is a 145-amino-acid chain: 3-hydroxyacyl-[acyl-carrier-protein] dehydratase FabZ (145 aa).

H47 is a catalytic residue.

This sequence belongs to the thioester dehydratase family. FabZ subfamily.

Its subcellular location is the cytoplasm. The catalysed reaction is a (3R)-hydroxyacyl-[ACP] = a (2E)-enoyl-[ACP] + H2O. Its function is as follows. Involved in unsaturated fatty acids biosynthesis. Catalyzes the dehydration of short chain beta-hydroxyacyl-ACPs and long chain saturated and unsaturated beta-hydroxyacyl-ACPs. This chain is 3-hydroxyacyl-[acyl-carrier-protein] dehydratase FabZ, found in Aromatoleum aromaticum (strain DSM 19018 / LMG 30748 / EbN1) (Azoarcus sp. (strain EbN1)).